A 101-amino-acid chain; its full sequence is Large ribosomal subunit protein bL28 (101 aa).

Belongs to the bacterial ribosomal protein bL28 family.

This chain is Large ribosomal subunit protein bL28, found in Methylorubrum populi (strain ATCC BAA-705 / NCIMB 13946 / BJ001) (Methylobacterium populi).